The sequence spans 102 residues: MVRYCVRSLSERSHEVYGQQLHGQEQGHHDQEEQGLSPEQVEVYERTQGHSHYRRRHCSRRRLHRIHRQQHRSCKRRRRHSCRHRRKHRRGCRTRRRTCRRH.

3 positions are modified to phosphoserine: serine 8, serine 10, and serine 37. Disordered stretches follow at residues 15 to 41 (EVYGQQLHGQEQGHHDQEEQGLSPEQV) and 66 to 102 (IHRQQHRSCKRRRRHSCRHRRKHRRGCRTRRRTCRRH).

It belongs to the protamine P2 family. In terms of assembly, interacts with TDRP. Post-translationally, proteolytic processing into mature chains is required for histone eviction during spermatogenesis. Transition proteins (TNP1 and TNP2) are required for processing. In terms of tissue distribution, testis.

The protein localises to the nucleus. It localises to the chromosome. Protamines substitute for histones in the chromatin of sperm during the haploid phase of spermatogenesis. They compact sperm DNA into a highly condensed, stable and inactive complex. In Pongo pygmaeus (Bornean orangutan), this protein is Protamine-2 (PRM2).